Here is a 790-residue protein sequence, read N- to C-terminus: Centrosomal protein of 78 kDa (790 aa).

Disordered regions lie at residues 325–345, 362–385, 428–462, 654–732, and 756–790; these read YQWVTSPSSKEPSKTAKQRKK, GLATKKPSSNGRKQGLGKDCYAPN, VTVTVESPSSSETDETEDSSESVQEAPQKTSIKEE, AKTG…LNEP, and KTIKSKPNLLEHSESDTLGSDFELQERVHSSAHLT. Phosphoserine occurs at positions 330 and 332. The segment covering 428 to 438 has biased composition (low complexity); it reads VTVTVESPSSS. Positions 455-510 form a coiled coil; the sequence is QKTSIKEETLQEKLEECLRQLKEERVIRLKADKRVSELEHENAQLRNINFSLSEAL. Basic and acidic residues-rich tracts occupy residues 693–708 and 721–732; these read PSRRPSAERHPRKDLL and GPGDRRSLLNEP.

It belongs to the CEP78 family. Interacts with PLK4. Interacts with FAM161A. Interacts with IFT20; regulating IFT20 stability and localization. Interacts with TTC21A; regulating TTC21A stability and localization. Interacts with USP16; promoting USP16-dependent deubiquitination of tektins. Interacts with DCAF1/VPRBP; promoting localization of the EDVP complex to centrosomes. Interacts with CEP350; promoting CEP78 localization to centrosome and centriole. In terms of tissue distribution, expressed by photoreceptor cells in the retina.

It localises to the cytoplasm. The protein resides in the cytoskeleton. The protein localises to the microtubule organizing center. Its subcellular location is the centrosome. It is found in the centriole. It localises to the cilium basal body. In terms of biological role, centriole wall protein that localizes to mature centrioles and regulates centriole and cilia biogenesis. Involved in centrosome duplication: required for efficient PLK4 centrosomal localization and PLK4-induced overduplication of centrioles. Involved in cilium biogenesis and controls cilium length. Acts as a regulator of protein stability by preventing ubiquitination of centrosomal proteins, such as CCP110 and tektins. Associates with the EDVP complex, preventing ubiquitination and degradation of CCP110. Promotes deubiquitination of tektin proteins (TEKT1, TEKT2, TEK3, TEKT4 and TEKT5) via its interaction with USP16. This chain is Centrosomal protein of 78 kDa, found in Mus musculus (Mouse).